Reading from the N-terminus, the 136-residue chain is Large ribosomal subunit protein bL21 (136 aa).

The protein belongs to the bacterial ribosomal protein bL21 family. In terms of assembly, part of the 50S ribosomal subunit. Contacts protein L20.

Its function is as follows. This protein binds to 23S rRNA in the presence of protein L20. In Trichodesmium erythraeum (strain IMS101), this protein is Large ribosomal subunit protein bL21.